The following is a 329-amino-acid chain: Fructose-1,6-bisphosphatase class 1 (329 aa).

Mg(2+)-binding residues include Glu84, Asp103, Leu105, and Asp106. Substrate-binding positions include 106–109 (DGSS), Asn196, and Lys262. Glu268 contributes to the Mg(2+) binding site.

This sequence belongs to the FBPase class 1 family. Homotetramer. Mg(2+) serves as cofactor.

It is found in the cytoplasm. The enzyme catalyses beta-D-fructose 1,6-bisphosphate + H2O = beta-D-fructose 6-phosphate + phosphate. The protein operates within carbohydrate biosynthesis; gluconeogenesis. This is Fructose-1,6-bisphosphatase class 1 from Shewanella loihica (strain ATCC BAA-1088 / PV-4).